Here is a 239-residue protein sequence, read N- to C-terminus: Probable 2-phosphosulfolactate phosphatase (239 aa).

It belongs to the ComB family. The cofactor is Mg(2+).

It catalyses the reaction (2R)-O-phospho-3-sulfolactate + H2O = (2R)-3-sulfolactate + phosphate. The chain is Probable 2-phosphosulfolactate phosphatase from Clostridium botulinum (strain Okra / Type B1).